Reading from the N-terminus, the 1275-residue chain is Probable Rho-type GTPase-activating protein 2 (1275 aa).

Disordered regions lie at residues 118–146 (KYES…SPYE), 213–238 (NTKR…LKDS), 280–306 (SSFR…KDNN), and 335–365 (SSPR…SKSG). Positions 122 to 143 (TDSFPSSQPSRANSPQSDSYSS) are enriched in polar residues. Composition is skewed to polar residues over residues 290–299 (TPFNSDSNIS) and 353–364 (PKHSTNNLSSKS). Phosphoserine is present on Ser-388. Disordered regions lie at residues 390–466 (IIEN…RSSF) and 539–561 (FSKS…SNSK). Composition is skewed to polar residues over residues 450-466 (SLSL…RSSF) and 552-561 (QVEKSTSNSK). The PH domain occupies 719 to 836 (HAQKEGVLLK…WLRAILRQVP (118 aa)). Basic and acidic residues predominate over residues 957-971 (ADTRRNQDAPEKHVP). Disordered stretches follow at residues 957–988 (ADTR…TDQS) and 1254–1275 (NGAQ…NEFF). Residues 1065 to 1275 (LPLNEAVNIS…DDNGEDNEFF (211 aa)) form the Rho-GAP domain. Positions 1260–1275 (SDSDVSDDNGEDNEFF) are enriched in acidic residues.

It localises to the nucleus. Its function is as follows. GTPase-activating protein for Rho-type proteins. This Schizosaccharomyces pombe (strain 972 / ATCC 24843) (Fission yeast) protein is Probable Rho-type GTPase-activating protein 2 (rga2).